The following is a 426-amino-acid chain: MTWGFVTCGPNEALVVSGCCYMKPLLVPGGRAFVWPVGQQVQRISLNTMTLQVESPCVYTSQGVPISVTGIAQVKVQGQNEDMLLTACEQFLGKSEAEINHIALVTLEGHQRAIMGSMTVEEIYKDRKKFSKQVFEVASSDLANMGITVVSYTIKDLRDEEGYLRSLGMARTAEVKRDARIGEAEARAEAHIKEAIAEEQRMAARFLNDTDIAKAQRDFELKKAAYDVEVQTKKAEAEMAYELQAAKTKQRIKEEQMQVKVIERTQEIAVQEQEIMRRERELEATIRRPAEAEKFRMEKLAEANKQRVVMEAEAEAESIRIRGEAEAFAIAAKAKAEAEQMAMKAEAYREYREAAMVEMLLDTLPKVAAEVAAPLSQAKKITMVSSGTGDIGAAKLTGEVLSIVNKVPELVKNITGVDIARSVHAG.

This sequence belongs to the band 7/mec-2 family. Flotillin subfamily. In terms of assembly, heterooligomeric complex of flotillins 1 and 2 and caveolins 1 and 2. As to expression, expressed in brain and ventral nerve cord from stage 12-16 of embryogenesis.

It localises to the cell membrane. It is found in the membrane. Its subcellular location is the caveola. Functionally, may act as a scaffolding protein within caveolar membranes, functionally participating in formation of caveolae or caveolae-like vesicles. The protein is Flotillin-1 of Drosophila melanogaster (Fruit fly).